The primary structure comprises 262 residues: tRNA (guanine-N(7)-)-methyltransferase (262 aa).

Residues 1 to 58 (MLPQDTNTDPLPGDDAESASGKSADASQGTPNPGDEVAHPRRIRSFVRRAGRTSTGQQ) form a disordered region. A compositionally biased stretch (basic residues) spans 40–51 (PRRIRSFVRRAG). Residues glutamate 92, glutamate 117, aspartate 144, and aspartate 167 each contribute to the S-adenosyl-L-methionine site. Aspartate 167 is a catalytic residue. Lysine 171 is a substrate binding site. The tract at residues 173-178 (RHNKRR) is interaction with RNA. Substrate contacts are provided by residues aspartate 203 and 241-244 (TKFE).

Belongs to the class I-like SAM-binding methyltransferase superfamily. TrmB family.

The catalysed reaction is guanosine(46) in tRNA + S-adenosyl-L-methionine = N(7)-methylguanosine(46) in tRNA + S-adenosyl-L-homocysteine. It functions in the pathway tRNA modification; N(7)-methylguanine-tRNA biosynthesis. In terms of biological role, catalyzes the formation of N(7)-methylguanine at position 46 (m7G46) in tRNA. The protein is tRNA (guanine-N(7)-)-methyltransferase of Cupriavidus metallidurans (strain ATCC 43123 / DSM 2839 / NBRC 102507 / CH34) (Ralstonia metallidurans).